The following is a 160-amino-acid chain: SsrA-binding protein (160 aa).

It belongs to the SmpB family.

The protein resides in the cytoplasm. In terms of biological role, required for rescue of stalled ribosomes mediated by trans-translation. Binds to transfer-messenger RNA (tmRNA), required for stable association of tmRNA with ribosomes. tmRNA and SmpB together mimic tRNA shape, replacing the anticodon stem-loop with SmpB. tmRNA is encoded by the ssrA gene; the 2 termini fold to resemble tRNA(Ala) and it encodes a 'tag peptide', a short internal open reading frame. During trans-translation Ala-aminoacylated tmRNA acts like a tRNA, entering the A-site of stalled ribosomes, displacing the stalled mRNA. The ribosome then switches to translate the ORF on the tmRNA; the nascent peptide is terminated with the 'tag peptide' encoded by the tmRNA and targeted for degradation. The ribosome is freed to recommence translation, which seems to be the essential function of trans-translation. This is SsrA-binding protein from Klebsiella pneumoniae (strain 342).